Consider the following 149-residue polypeptide: L-alanine exporter AlaE (149 aa).

Helical transmembrane passes span 17–37, 43–63, 86–106, and 111–131; these read FAMVIFCFITGMFIEIFISGM, LASRMLSIPVNIAIAWPYGVF, LTAYVLFQSPVYAAILFTVGA, and IITAVSSNAAVSCVMGVFYGY.

This sequence belongs to the AlaE exporter family.

It localises to the cell inner membrane. Functionally, exports L-alanine. This is L-alanine exporter AlaE from Aliivibrio salmonicida (strain LFI1238) (Vibrio salmonicida (strain LFI1238)).